Consider the following 444-residue polypeptide: Acyl-CoA 6-desaturase (444 aa).

Residues 1–131 (MGKGGNQGEG…DMNLFKTNHV (131 aa)) are Cytoplasmic-facing. The region spanning 18–95 (VPTFSWEEIQ…LKPLLIGELA (78 aa)) is the Cytochrome b5 heme-binding domain. A helical transmembrane segment spans residues 132–152 (FFLLLLAHIIALESIAWFTVF). Residues 153-157 (YFGNG) lie on the Lumenal side of the membrane. A helical membrane pass occupies residues 158 to 178 (WIPTLITAFVLATSQAQAGWL). Topologically, residues 179–264 (QHDYGHLSVY…KYLPYNHQHE (86 aa)) are cytoplasmic. Positions 180 to 184 (HDYGH) match the Histidine box-1 motif. Residues 217 to 221 (HFQHH) carry the Histidine box-2 motif. Residues 265-285 (YFFLIGPPLLIPMYFQYQIIM) traverse the membrane as a helical segment. Topologically, residues 286–305 (TMIVHKNWVDLAWAVSYYIR) are lumenal. The helical transmembrane segment at 306–326 (FFITYIPFYGILGALLFLNFI) threads the bilayer. Residues 327 to 444 (RFLESHWFVW…KLWLDAYLHK (118 aa)) are Cytoplasmic-facing. Positions 382-386 (QIEHH) match the Histidine box-3 motif.

This sequence belongs to the fatty acid desaturase type 1 family. Expressed in a wide array of tissues, highest expression is found in liver followed by brain, lung, heart, and retina. A lower level is found in breast tumor when compared with normal tissues; lowest levels were found in patients with poor prognostic index.

Its subcellular location is the endoplasmic reticulum membrane. It catalyses the reaction (9Z,12Z)-octadecadienoyl-CoA + 2 Fe(II)-[cytochrome b5] + O2 + 2 H(+) = (6Z,9Z,12Z)-octadecatrienoyl-CoA + 2 Fe(III)-[cytochrome b5] + 2 H2O. It carries out the reaction (9Z,12Z,15Z)-octadecatrienoyl-CoA + 2 Fe(II)-[cytochrome b5] + O2 + 2 H(+) = (6Z,9Z,12Z,15Z)-octadecatetraenoyl-CoA + 2 Fe(III)-[cytochrome b5] + 2 H2O. The catalysed reaction is hexadecanoyl-CoA + 2 Fe(II)-[cytochrome b5] + O2 + 2 H(+) = (6Z)-hexadecenoyl-CoA + 2 Fe(III)-[cytochrome b5] + 2 H2O. The enzyme catalyses (9Z,12Z,15Z,18Z,21Z)-tetracosapentaenoyl-CoA + 2 Fe(II)-[cytochrome b5] + O2 + 2 H(+) = (6Z,9Z,12Z,15Z,18Z,21Z)-tetracosahexaenoyl-CoA + 2 Fe(III)-[cytochrome b5] + 2 H2O. It catalyses the reaction (11E)-octadecenoyl-CoA + 2 Fe(II)-[cytochrome b5] + O2 + 2 H(+) = (6Z,11E)-octadecadienoyl-CoA + 2 Fe(III)-[cytochrome b5] + 2 H2O. It carries out the reaction (11Z,14Z)-eicosadienoyl-CoA + 2 Fe(II)-[cytochrome b5] + O2 + 2 H(+) = (8Z,11Z,14Z)-eicosatrienoyl-CoA + 2 Fe(III)-[cytochrome b5] + 2 H2O. The catalysed reaction is (11Z,14Z,17Z)-eicosatrienoyl-CoA + 2 Fe(II)-[cytochrome b5] + O2 + 2 H(+) = (8Z,11Z,14Z,17Z)-eicosatetraenoyl-CoA + 2 Fe(III)-[cytochrome b5] + 2 H2O. It participates in lipid metabolism; polyunsaturated fatty acid biosynthesis. Involved in the biosynthesis of highly unsaturated fatty acids (HUFA) from the essential polyunsaturated fatty acids (PUFA) linoleic acid (LA) (18:2n-6) and alpha-linolenic acid (ALA) (18:3n-3) precursors, acting as a fatty acyl-coenzyme A (CoA) desaturase that introduces a cis double bond at carbon 6 of the fatty acyl chain. Catalyzes the first and rate limiting step in this pathway which is the desaturation of LA (18:2n-6) and ALA (18:3n-3) into gamma-linoleate (GLA) (18:3n-6) and stearidonate (18:4n-3), respectively. Subsequently, in the biosynthetic pathway of HUFA n-3 series, it desaturates tetracosapentaenoate (24:5n-3) to tetracosahexaenoate (24:6n-3), which is then converted to docosahexaenoate (DHA)(22:6n-3), an important lipid for nervous system function. Desaturates hexadecanate (palmitate) to produce 6Z-hexadecenoate (sapienate), a fatty acid unique to humans and major component of human sebum, that has been implicated in the development of acne and may have potent antibacterial activity. It can also desaturate (11E)-octadecenoate (trans-vaccenoate, the predominant trans fatty acid in human milk) at carbon 6 generating (6Z,11E)-octadecadienoate. In addition to Delta-6 activity, this enzyme exhibits Delta-8 activity with slight biases toward n-3 fatty acyl-CoA substrates. This Homo sapiens (Human) protein is Acyl-CoA 6-desaturase.